A 548-amino-acid polypeptide reads, in one-letter code: Fluconazole resistance protein 1 (548 aa).

The disordered stretch occupies residues Ser-30–Pro-94. The segment covering Ala-31–Tyr-51 has biased composition (basic and acidic residues). The span at Ser-60 to Ser-73 shows a compositional bias: low complexity. 12 helical membrane passes run Leu-104–Thr-124, Val-139–Phe-159, Phe-179–Val-199, Ile-203–Ile-223, Leu-230–Gly-250, Phe-261–Phe-281, Ile-347–Gly-367, Val-376–Ile-396, Phe-416–Trp-436, Val-440–Phe-460, Ala-476–Phe-496, and Val-511–Ile-531.

This sequence belongs to the major facilitator superfamily.

It is found in the membrane. Probable efflux transporter. Confers resistance to the azole derivative fluconazole (FCZ). This is Fluconazole resistance protein 1 (FLR1) from Saccharomyces cerevisiae (strain ATCC 204508 / S288c) (Baker's yeast).